The following is an 883-amino-acid chain: Pre-mRNA-splicing factor syf1 homolog (883 aa).

12 HAT repeats span residues 13–45 (INFE…HKAK), 46–78 (APNN…TRRK), 88–120 (PMYE…FMTS), 122–156 (CKIT…FVRR), 158–190 (EMPE…EADR), 268–303 (GLFD…FEEL), 368–406 (DKPA…FYEA), 463–495 (KRKI…LEES), 531–565 (NYFE…KFLE), 570–604 (TKLE…LEEE), 642–676 (YGLP…LETK), and 678–712 (GEVD…FEVR). 2 disordered regions span residues 794 to 851 (RGET…DEEG) and 864 to 883 (IPAK…SDGE). Acidic residues predominate over residues 812-834 (DEIDIGDSDEDDEEEDDDEENEM). Polar residues-rich tracts occupy residues 835–844 (TNENQASAAV) and 873–883 (KPSNQGDSDGE).

This sequence belongs to the crooked-neck family. In terms of assembly, component of the NTC(Nineteen)/Prp19 complex composed of at least fand, Prp19,CG9667/ISY1 and Cdc5/CDC5L. Within the complex, interacts with Prp19 and ISY1/CG9667.

The protein resides in the nucleus. Its function is as follows. Subunit of the NTC(Nineteen)/Prp19 complex, which is part of the spliceosome. The complex participates in spliceosome assembly, its remodeling and is required for efficient spliceosome activation. Essential for efficient pre-mRNA splicing. In embryos, efficient pre-mRNA splicing of zygotic transcripts is essential during dynamic cellular processes that require rapid division and/or dramatic changes in gene expression such as blastoderm cellularization, tracheal branching morphogenesis, Malpighian morphogenesis and epidermal development. Part of its role in promoting embryo tracheal development is also due to specifically splicing bnl transcripts which results in the activation of the BNL-FGF pathway. The sequence is that of Pre-mRNA-splicing factor syf1 homolog from Drosophila melanogaster (Fruit fly).